The chain runs to 284 residues: MTHAIEVRGLSKSFRADRKALDDVTLHIAPGEMVALLGASGSGKSTLLRHVAGFITGDAGAGEILVNGRHVQRNGRLARNVRKVRGEIGFVFQQFNLVGRLPVITNVLVGTLARVPKWRSLLRIFKADEVQGGLDALAQVGIDDYAFQRASTLSGGQQQRAAIARTLVQNASVILADEPIASLDPESSRRVMSLLRQINRTRKVAVLVSLHQVDVAMRYCPRVVALRHGKVVYDGPSAALTPGMLRDLYGTEADELLLDSVPDEDVSTAAMPAPAMVTMNLAAA.

Residues 5–253 (IEVRGLSKSF…MLRDLYGTEA (249 aa)) enclose the ABC transporter domain. 38–45 (GASGSGKS) contributes to the ATP binding site.

It belongs to the ABC transporter superfamily. Phosphonates importer (TC 3.A.1.9.1) family. In terms of assembly, the complex is composed of two ATP-binding proteins (PhnC), two transmembrane proteins (PhnE) and a solute-binding protein (PhnD).

The protein localises to the cell inner membrane. It carries out the reaction phosphonate(out) + ATP + H2O = phosphonate(in) + ADP + phosphate + H(+). Its function is as follows. Part of the ABC transporter complex PhnCDE involved in phosphonates import. Responsible for energy coupling to the transport system. This is Phosphonates import ATP-binding protein PhnC 2 from Cupriavidus necator (strain ATCC 17699 / DSM 428 / KCTC 22496 / NCIMB 10442 / H16 / Stanier 337) (Ralstonia eutropha).